The chain runs to 106 residues: UPF0473 protein LCABL_08490 (106 aa).

The protein belongs to the UPF0473 family.

The sequence is that of UPF0473 protein LCABL_08490 from Lacticaseibacillus casei (strain BL23) (Lactobacillus casei).